The following is a 231-amino-acid chain: Protoporphyrinogen IX dehydrogenase [quinone] (231 aa).

A Flavodoxin-like domain is found at 8-178 (CLMLYSTTDG…AVRRFASDFA (171 aa)). FMN is bound by residues 14-18 (TTDGH) and 90-158 (FFSV…ETDS). Residues 208–228 (CLLAIVGMSAAVIVGIRIIAA) traverse the membrane as a helical segment.

It belongs to the HemG family. The cofactor is FMN.

Its subcellular location is the membrane. It carries out the reaction protoporphyrinogen IX + 3 a menaquinone = protoporphyrin IX + 3 a menaquinol. It catalyses the reaction protoporphyrinogen IX + 3 a ubiquinone = protoporphyrin IX + 3 a ubiquinol. The catalysed reaction is protoporphyrinogen IX + 3 a quinone = protoporphyrin IX + 3 a quinol. It functions in the pathway porphyrin-containing compound metabolism; protoporphyrin-IX biosynthesis; protoporphyrin-IX from protoporphyrinogen-IX: step 1/1. In terms of biological role, in E.coli extracts under anerobic conditions catalyzes the 6-electron oxidation of protoporphyrinogen IX to form protoporphyrin IX, transferring electrons to fumarate reductase, presumably via menaquinone. In vitro under aerobic conditions forms protoporphyrin IX using ubiquinone as an electron acceptor. Complements an E.coli hemG deletion, allowing normal growth in vivo. The chain is Protoporphyrinogen IX dehydrogenase [quinone] from Leishmania major.